A 184-amino-acid chain; its full sequence is ATP-dependent protease subunit HslV (184 aa).

The active site involves Thr2. Na(+) is bound by residues Gly157, Cys160, and Thr163.

Belongs to the peptidase T1B family. HslV subfamily. As to quaternary structure, a double ring-shaped homohexamer of HslV is capped on each side by a ring-shaped HslU homohexamer. The assembly of the HslU/HslV complex is dependent on binding of ATP.

It is found in the cytoplasm. The enzyme catalyses ATP-dependent cleavage of peptide bonds with broad specificity.. With respect to regulation, allosterically activated by HslU binding. In terms of biological role, protease subunit of a proteasome-like degradation complex believed to be a general protein degrading machinery. The sequence is that of ATP-dependent protease subunit HslV from Vibrio vulnificus (strain CMCP6).